The primary structure comprises 147 residues: Spermidine export protein MdtJ (147 aa).

A run of 4 helical transmembrane segments spans residues 1–21 (MIYWIFLGLAIIAEIIGTLSM), 31–51 (TGHIVMYFMITGSYVMLSLAV), 54–74 (VALGVAYALWEGIGILIITIF), and 81–101 (ETLSPLKIAGLVTLIGGILLV). The disordered stretch occupies residues 105 to 147 (TRKPKQPNCHRGNRPPSVQELKTQTTGHHKGVAVESGEHHAAA).

It belongs to the drug/metabolite transporter (DMT) superfamily. Small multidrug resistance (SMR) (TC 2.A.7.1) family. MdtJ subfamily. Forms a complex with MdtI.

It localises to the cell inner membrane. Catalyzes the excretion of spermidine. This chain is Spermidine export protein MdtJ, found in Yersinia pestis bv. Antiqua (strain Antiqua).